Reading from the N-terminus, the 500-residue chain is Probable cytosol aminopeptidase (500 aa).

Mn(2+)-binding residues include K268 and D273. K280 is a catalytic residue. Mn(2+)-binding residues include D291, D350, and E352. Residue R354 is part of the active site.

It belongs to the peptidase M17 family. Requires Mn(2+) as cofactor.

It is found in the cytoplasm. The enzyme catalyses Release of an N-terminal amino acid, Xaa-|-Yaa-, in which Xaa is preferably Leu, but may be other amino acids including Pro although not Arg or Lys, and Yaa may be Pro. Amino acid amides and methyl esters are also readily hydrolyzed, but rates on arylamides are exceedingly low.. It catalyses the reaction Release of an N-terminal amino acid, preferentially leucine, but not glutamic or aspartic acids.. Its function is as follows. Presumably involved in the processing and regular turnover of intracellular proteins. Catalyzes the removal of unsubstituted N-terminal amino acids from various peptides. The polypeptide is Probable cytosol aminopeptidase (Azoarcus sp. (strain BH72)).